The following is a 160-amino-acid chain: Putative antiporter subunit mnhE2 (160 aa).

Helical transmembrane passes span serine 22–leucine 42, phenylalanine 61–leucine 81, and tryptophan 102–isoleucine 122.

This sequence belongs to the CPA3 antiporters (TC 2.A.63) subunit E family. May form a heterooligomeric complex that consists of seven subunits: mnhA2, mnhB2, mnhC2, mnhD2, mnhE2, mnhF2 and mnhG2.

It is found in the cell membrane. This chain is Putative antiporter subunit mnhE2 (mnhE2), found in Staphylococcus haemolyticus (strain JCSC1435).